Reading from the N-terminus, the 448-residue chain is N-succinylarginine dihydrolase (448 aa).

Residues glycine 19–serine 28, asparagine 110, and histidine 137–arginine 138 each bind substrate. Glutamate 174 is a catalytic residue. Arginine 214 lines the substrate pocket. Histidine 250 is a catalytic residue. Residues aspartate 252 and asparagine 365 each coordinate substrate. The Nucleophile role is filled by cysteine 371.

This sequence belongs to the succinylarginine dihydrolase family. In terms of assembly, homodimer.

The enzyme catalyses N(2)-succinyl-L-arginine + 2 H2O + 2 H(+) = N(2)-succinyl-L-ornithine + 2 NH4(+) + CO2. The protein operates within amino-acid degradation; L-arginine degradation via AST pathway; L-glutamate and succinate from L-arginine: step 2/5. Its function is as follows. Catalyzes the hydrolysis of N(2)-succinylarginine into N(2)-succinylornithine, ammonia and CO(2). This chain is N-succinylarginine dihydrolase, found in Pseudomonas syringae pv. tomato (strain ATCC BAA-871 / DC3000).